The primary structure comprises 449 residues: Polyadenylation factor subunit 2 (449 aa).

WD repeat units follow at residues 77 to 116 (KVKHVIPAITWTPEGRRLVVATYSGEFSLWNGSSFNFESI), 119 to 158 (AHDSAVTVMQYSHAGDWLISGDADGTIKIWQPNFNMVKVL), 161 to 200 (AHTECMRDISFSYSDQKFVTCSDDNVLKIWNFSNGQQERV), 203 to 242 (GHHWDVKSCDWHPKMGLIVSGSKDNLIKLWDPRTGRNVST), 245 to 285 (GLKH…RELQ), 288 to 328 (RDDM…SNST), and 337 to 376 (AHEKSVTSLAYSPVGHILASAAKDRTIRFWARSRPVDPNA). Residues 411-432 (LPPANETNLGTPQPSILGSESI) form a disordered region. Over residues 415 to 432 (NETNLGTPQPSILGSESI) the composition is skewed to polar residues.

The protein resides in the nucleus. Its function is as follows. Required for 3'-end cleavage and polyadenylation of pre-mRNAs. Also involved in chromosome segregation where it has a role in chromosome attachment to the mitotic spindle. The polypeptide is Polyadenylation factor subunit 2 (PSF2) (Eremothecium gossypii (strain ATCC 10895 / CBS 109.51 / FGSC 9923 / NRRL Y-1056) (Yeast)).